We begin with the raw amino-acid sequence, 377 residues long: F-box protein At2g05970 (377 aa).

An F-box domain is found at 8 to 55 (ASWSELCPDVLRCVFELLSFSDLNRTRSVCSSWHSASRHCVPTQNQIP).

The protein is F-box protein At2g05970 of Arabidopsis thaliana (Mouse-ear cress).